The sequence spans 948 residues: Bifunctional glutamine synthetase adenylyltransferase/adenylyl-removing enzyme (948 aa).

The tract at residues 1–447 (MLTPDNKLMS…EFQQVVGAES (447 aa)) is adenylyl removase. The adenylyl transferase stretch occupies residues 453 to 948 (EQGLQVLWQD…NCWNHLLEDD (496 aa)).

Belongs to the GlnE family. It depends on Mg(2+) as a cofactor.

It catalyses the reaction [glutamine synthetase]-O(4)-(5'-adenylyl)-L-tyrosine + phosphate = [glutamine synthetase]-L-tyrosine + ADP. The enzyme catalyses [glutamine synthetase]-L-tyrosine + ATP = [glutamine synthetase]-O(4)-(5'-adenylyl)-L-tyrosine + diphosphate. Its function is as follows. Involved in the regulation of glutamine synthetase GlnA, a key enzyme in the process to assimilate ammonia. When cellular nitrogen levels are high, the C-terminal adenylyl transferase (AT) inactivates GlnA by covalent transfer of an adenylyl group from ATP to specific tyrosine residue of GlnA, thus reducing its activity. Conversely, when nitrogen levels are low, the N-terminal adenylyl removase (AR) activates GlnA by removing the adenylyl group by phosphorolysis, increasing its activity. The regulatory region of GlnE binds the signal transduction protein PII (GlnB) which indicates the nitrogen status of the cell. The polypeptide is Bifunctional glutamine synthetase adenylyltransferase/adenylyl-removing enzyme (Idiomarina loihiensis (strain ATCC BAA-735 / DSM 15497 / L2-TR)).